We begin with the raw amino-acid sequence, 131 residues long: Fumarate reductase subunit C (131 aa).

Transmembrane regions (helical) follow at residues 30–50 (EGTA…LFAL), 57–77 (WMGF…LITL), and 109–129 (IIKG…YVAL).

Belongs to the FrdC family. As to quaternary structure, part of an enzyme complex containing four subunits: a flavoprotein (FrdA), an iron-sulfur protein (FrdB), and two hydrophobic anchor proteins (FrdC and FrdD).

It is found in the cell inner membrane. Two distinct, membrane-bound, FAD-containing enzymes are responsible for the catalysis of fumarate and succinate interconversion; fumarate reductase is used in anaerobic growth, and succinate dehydrogenase is used in aerobic growth. Anchors the catalytic components of the fumarate reductase complex to the cell inner membrane, binds quinones. This Salmonella choleraesuis (strain SC-B67) protein is Fumarate reductase subunit C.